The chain runs to 199 residues: Holliday junction branch migration complex subunit RuvA (199 aa).

The domain I stretch occupies residues 1–63 (MIASVRGEVL…EDSMTLYGFS (63 aa)). A domain II region spans residues 64 to 141 (DTESKDLFSL…DAVATTAGAA (78 aa)). Residues 141 to 145 (ASGAV) are flexible linker. A domain III region spans residues 146 to 199 (VGSSIRDQIVEALEGLGFPIKQAEQATDSVLAESPEATTSVALRSALSLLGKTR).

Belongs to the RuvA family. Homotetramer. Forms an RuvA(8)-RuvB(12)-Holliday junction (HJ) complex. HJ DNA is sandwiched between 2 RuvA tetramers; dsDNA enters through RuvA and exits via RuvB. An RuvB hexamer assembles on each DNA strand where it exits the tetramer. Each RuvB hexamer is contacted by two RuvA subunits (via domain III) on 2 adjacent RuvB subunits; this complex drives branch migration. In the full resolvosome a probable DNA-RuvA(4)-RuvB(12)-RuvC(2) complex forms which resolves the HJ.

The protein resides in the cytoplasm. The RuvA-RuvB-RuvC complex processes Holliday junction (HJ) DNA during genetic recombination and DNA repair, while the RuvA-RuvB complex plays an important role in the rescue of blocked DNA replication forks via replication fork reversal (RFR). RuvA specifically binds to HJ cruciform DNA, conferring on it an open structure. The RuvB hexamer acts as an ATP-dependent pump, pulling dsDNA into and through the RuvAB complex. HJ branch migration allows RuvC to scan DNA until it finds its consensus sequence, where it cleaves and resolves the cruciform DNA. This is Holliday junction branch migration complex subunit RuvA from Rhodococcus erythropolis (strain PR4 / NBRC 100887).